Reading from the N-terminus, the 145-residue chain is D-aminoacyl-tRNA deacylase (145 aa).

The Gly-cisPro motif, important for rejection of L-amino acids motif lies at 137 to 138; sequence GP.

The protein belongs to the DTD family. In terms of assembly, homodimer.

It is found in the cytoplasm. The enzyme catalyses glycyl-tRNA(Ala) + H2O = tRNA(Ala) + glycine + H(+). The catalysed reaction is a D-aminoacyl-tRNA + H2O = a tRNA + a D-alpha-amino acid + H(+). Functionally, an aminoacyl-tRNA editing enzyme that deacylates mischarged D-aminoacyl-tRNAs. Also deacylates mischarged glycyl-tRNA(Ala), protecting cells against glycine mischarging by AlaRS. Acts via tRNA-based rather than protein-based catalysis; rejects L-amino acids rather than detecting D-amino acids in the active site. By recycling D-aminoacyl-tRNA to D-amino acids and free tRNA molecules, this enzyme counteracts the toxicity associated with the formation of D-aminoacyl-tRNA entities in vivo and helps enforce protein L-homochirality. This Pseudomonas syringae pv. tomato (strain ATCC BAA-871 / DC3000) protein is D-aminoacyl-tRNA deacylase.